Consider the following 618-residue polypeptide: Auxin efflux carrier component 3a (618 aa).

Residues 1-6 lie on the Extracellular side of the membrane; sequence MISGHD. A helical transmembrane segment spans residues 7–27; that stretch reads FYTVMAAVVPLYVAMFLAYGS. Over 28–38 the chain is Cytoplasmic; sequence VRWWGIFTPDQ. The chain crosses the membrane as a helical span at residues 39-59; it reads CSGINRFVAIFAVPLLSFHFI. Val51 serves as a coordination point for (indol-3-yl)acetate. Topologically, residues 60–70 are extracellular; it reads STNDPYAMNLR. Residues 71–90 traverse the membrane as a helical segment; the sequence is FLAADTLQKLLVLAGLAAWS. Over 91-104 the chain is Cytoplasmic; the sequence is RLPSRTGAPRLDWS. A helical transmembrane segment spans residues 105–125; sequence ITLFSLSTLPNTLVMGIPLLI. (indol-3-yl)acetate is bound by residues Asn115 and Leu117. Residues 126 to 134 are Extracellular-facing; that stretch reads AMYGPYSGS. A helical transmembrane segment spans residues 135-155; sequence LMVQIVVLQCIIWYTLMLFLF. Tyr148 is a (indol-3-yl)acetate binding site. The Cytoplasmic portion of the chain corresponds to 156–478; sequence EFRAARMLIA…LIRNPNTYSS (323 aa). Residues 281 to 293 show a composition bias toward polar residues; that stretch reads SLQSSRGPTPRQS. Residues 281–312 are disordered; it reads SLQSSRGPTPRQSNFDEHSARPPKPPATTTGA. A helical membrane pass occupies residues 479–499; that stretch reads LLGLAWSLVAFRWHVSMPAIV. The Extracellular segment spans residues 500–502; the sequence is EKS. Residues 503–523 traverse the membrane as a helical segment; that stretch reads ISILSDAGLGMAMFSLGLFMA. Residues 524–539 are Cytoplasmic-facing; it reads LQPSIIACGKSAAVVS. A helical membrane pass occupies residues 540 to 560; it reads MAVRFLAGPAVMAAASIAIGL. The Extracellular segment spans residues 561–563; that stretch reads RGT. The chain crosses the membrane as a helical span at residues 564–584; the sequence is LLHVAIVQAALPQGIVPFVFA. (indol-3-yl)acetate-binding residues include Ile578 and Val579. Residues 585-597 lie on the Cytoplasmic side of the membrane; that stretch reads KEYNVHPAILSTA. Residues 598–618 form a helical membrane-spanning segment; the sequence is VIFGMLIALPITLLYYILLGL.

This sequence belongs to the auxin efflux carrier (TC 2.A.69.1) family. As to quaternary structure, homodimer. Expressed in coleoptiles, roots, vascular bundles of leaves, shoots, lamina joints and vascular bundles of the lemma and filament. Expressed in stem bases, stems, leaves and young panicles.

The protein localises to the cell membrane. In terms of biological role, acts as a component of the auxin efflux carrier. Involved in the polar auxin transport which may regulate crown root development and response to water stress. The protein is Auxin efflux carrier component 3a of Oryza sativa subsp. japonica (Rice).